The primary structure comprises 281 residues: Diaminopimelate epimerase (281 aa).

Substrate is bound by residues Asn-11 and Asn-65. The active-site Proton donor is the Cys-74. Substrate contacts are provided by residues 75–76 (GN), Asn-164, Asn-197, and 215–216 (ER). Residue Cys-224 is the Proton acceptor of the active site. Position 225 to 226 (225 to 226 (GT)) interacts with substrate.

The protein belongs to the diaminopimelate epimerase family. Homodimer.

The protein localises to the cytoplasm. It catalyses the reaction (2S,6S)-2,6-diaminopimelate = meso-2,6-diaminopimelate. Its pathway is amino-acid biosynthesis; L-lysine biosynthesis via DAP pathway; DL-2,6-diaminopimelate from LL-2,6-diaminopimelate: step 1/1. In terms of biological role, catalyzes the stereoinversion of LL-2,6-diaminopimelate (L,L-DAP) to meso-diaminopimelate (meso-DAP), a precursor of L-lysine and an essential component of the bacterial peptidoglycan. This chain is Diaminopimelate epimerase, found in Heliobacterium modesticaldum (strain ATCC 51547 / Ice1).